The following is a 444-amino-acid chain: Pestheic acid cluster transcriptional regulator 2 (444 aa).

A compositionally biased stretch (polar residues) spans 1–22 (MEAADPNNNLTITSPSTLLSNP). Residues 1 to 31 (MEAADPNNNLTITSPSTLLSNPTQPPAQPLK) form a disordered region. The zn(2)-C6 fungal-type DNA-binding region spans 36–63 (CHACASSKVKCHKEKPTCSRCRKRGITC). Residues 326–348 (ARVGSGVSTHTTAGQYEPQVEQQ) are disordered. Residues 331 to 348 (GVSTHTTAGQYEPQVEQQ) show a composition bias toward polar residues.

It is found in the nucleus. Its function is as follows. Transcription factor that, with ptaR1 and ptaR3, coregulates the expression of the gene cluster that mediates the biosynthesis of pestheic acid, a diphenyl ether which is a biosynthetic precursor of the unique chloropupukeananes. The sequence is that of Pestheic acid cluster transcriptional regulator 2 from Pestalotiopsis fici (strain W106-1 / CGMCC3.15140).